A 78-amino-acid polypeptide reads, in one-letter code: Large ribosomal subunit protein uL29 (78 aa).

It belongs to the universal ribosomal protein uL29 family.

The polypeptide is Large ribosomal subunit protein uL29 (Rhodococcus opacus (strain B4)).